The primary structure comprises 236 residues: Large ribosomal subunit protein uL3 (236 aa).

Disordered stretches follow at residues 132–153 and 200–236; these read SNRASHGNSRSHNVPGSIGMAQ and KGGDVTVSPSIRSARPTNNGNVNAAAKGGAKSGKKGG. Positions 133–145 are enriched in polar residues; it reads NRASHGNSRSHNV. Glutamine 153 bears the N5-methylglutamine mark. The segment covering 206–216 has biased composition (polar residues); sequence VSPSIRSARPT. The segment covering 217-228 has biased composition (low complexity); sequence NNGNVNAAAKGG.

The protein belongs to the universal ribosomal protein uL3 family. Part of the 50S ribosomal subunit. Forms a cluster with proteins L14 and L19. Post-translationally, methylated by PrmB.

Functionally, one of the primary rRNA binding proteins, it binds directly near the 3'-end of the 23S rRNA, where it nucleates assembly of the 50S subunit. In Nitrosospira multiformis (strain ATCC 25196 / NCIMB 11849 / C 71), this protein is Large ribosomal subunit protein uL3.